The sequence spans 396 residues: Probable sugar efflux transporter (396 aa).

Helical transmembrane passes span 15-35 (VVTLAVAAFIFNTTEFVPVGL), 50-70 (VGIMLTIYAWVVALMSLPFML), 81-101 (LICLFVVFIASHVLSFLSWSF), 103-123 (VLVISRIGVAFAHAIFWSITA), 136-156 (AQALSLIATGTALAMVLGLPL), 170-190 (FFAIGIGALITLLCLIKLLPL), 209-229 (PALMSIYLLTVVVVTAHYTAY), 246-266 (FATALLLLLGGAGIIGSVIFG), 275-295 (ALVSTAIALLLVCLALLLPAA), 299-319 (IHLGVLSIFWGIAMMLIGLGM), 333-353 (VAMALFSGIFNIGIGAGALVG), and 364-384 (MIGYVGAVPAFAALIWSIIIF).

The protein belongs to the major facilitator superfamily. SotB (TC 2.A.1.2) family.

It is found in the cell inner membrane. Involved in the efflux of sugars. The physiological role may be the reduction of the intracellular concentration of toxic sugars or sugar metabolites. This chain is Probable sugar efflux transporter, found in Shigella boydii serotype 18 (strain CDC 3083-94 / BS512).